The primary structure comprises 600 residues: KIF-binding protein (600 aa).

The stretch at 384–434 (KAENEATEYSKIMQDYAEAYEHIAFFEENPENQAKMQKRRAKYLEDLLDLL) forms a coiled coil.

Belongs to the KIF-binding protein family.

It is found in the cytoplasm. It localises to the cytoskeleton. This Drosophila melanogaster (Fruit fly) protein is KIF-binding protein.